A 222-amino-acid polypeptide reads, in one-letter code: Riboflavin kinase (222 aa).

Residues 1-92 (MVLAEDLECL…CRLFAHEGGH (92 aa)) form an H-T-H motif-like region. A riboflavin kinase region spans residues 93 to 222 (YTLPGIVISG…DRVNVEVAYD (130 aa)). 102–107 (GLGEGR) contacts CDP. Mg(2+) contacts are provided by T131 and N133. FMN-binding residues include S188 and E196. 201-204 (VGLR) provides a ligand contact to CDP.

Belongs to the archaeal riboflavin kinase family. Mg(2+) serves as cofactor.

It carries out the reaction riboflavin + CTP = CDP + FMN + H(+). Its pathway is cofactor biosynthesis; FMN biosynthesis; FMN from riboflavin (CTP route): step 1/1. Functionally, catalyzes the CTP-dependent phosphorylation of riboflavin (vitamin B2) to form flavin mononucleotide (FMN). The polypeptide is Riboflavin kinase (ribK) (Methanoregula boonei (strain DSM 21154 / JCM 14090 / 6A8)).